Consider the following 227-residue polypeptide: Cytochrome c oxidase subunit 2 (227 aa).

The Mitochondrial intermembrane portion of the chain corresponds to 1–14 (MAYPFQLGFQDAAS). Residues 15–45 (PIMEELLHFHDHTLMIVFLISSLVLYIITLM) traverse the membrane as a helical segment. Residues 46 to 59 (LTTKLTHTSTMDAQ) are Mitochondrial matrix-facing. A helical transmembrane segment spans residues 60–87 (EVETVWTILPAIILILIALPSLRILYMM). At 88–227 (DEVNNPSLTV…VFEKWSVSML (140 aa)) the chain is on the mitochondrial intermembrane side. Histidine 161, cysteine 196, glutamate 198, cysteine 200, histidine 204, and methionine 207 together coordinate Cu cation. A Mg(2+)-binding site is contributed by glutamate 198.

The protein belongs to the cytochrome c oxidase subunit 2 family. Component of the cytochrome c oxidase (complex IV, CIV), a multisubunit enzyme composed of 14 subunits. The complex is composed of a catalytic core of 3 subunits MT-CO1, MT-CO2 and MT-CO3, encoded in the mitochondrial DNA, and 11 supernumerary subunits COX4I, COX5A, COX5B, COX6A, COX6B, COX6C, COX7A, COX7B, COX7C, COX8 and NDUFA4, which are encoded in the nuclear genome. The complex exists as a monomer or a dimer and forms supercomplexes (SCs) in the inner mitochondrial membrane with NADH-ubiquinone oxidoreductase (complex I, CI) and ubiquinol-cytochrome c oxidoreductase (cytochrome b-c1 complex, complex III, CIII), resulting in different assemblies (supercomplex SCI(1)III(2)IV(1) and megacomplex MCI(2)III(2)IV(2)). Found in a complex with TMEM177, COA6, COX18, COX20, SCO1 and SCO2. Interacts with TMEM177 in a COX20-dependent manner. Interacts with COX20. Interacts with COX16. Cu cation serves as cofactor.

Its subcellular location is the mitochondrion inner membrane. It carries out the reaction 4 Fe(II)-[cytochrome c] + O2 + 8 H(+)(in) = 4 Fe(III)-[cytochrome c] + 2 H2O + 4 H(+)(out). In terms of biological role, component of the cytochrome c oxidase, the last enzyme in the mitochondrial electron transport chain which drives oxidative phosphorylation. The respiratory chain contains 3 multisubunit complexes succinate dehydrogenase (complex II, CII), ubiquinol-cytochrome c oxidoreductase (cytochrome b-c1 complex, complex III, CIII) and cytochrome c oxidase (complex IV, CIV), that cooperate to transfer electrons derived from NADH and succinate to molecular oxygen, creating an electrochemical gradient over the inner membrane that drives transmembrane transport and the ATP synthase. Cytochrome c oxidase is the component of the respiratory chain that catalyzes the reduction of oxygen to water. Electrons originating from reduced cytochrome c in the intermembrane space (IMS) are transferred via the dinuclear copper A center (CU(A)) of subunit 2 and heme A of subunit 1 to the active site in subunit 1, a binuclear center (BNC) formed by heme A3 and copper B (CU(B)). The BNC reduces molecular oxygen to 2 water molecules using 4 electrons from cytochrome c in the IMS and 4 protons from the mitochondrial matrix. This chain is Cytochrome c oxidase subunit 2 (MT-CO2), found in Balaenoptera physalus (Fin whale).